We begin with the raw amino-acid sequence, 323 residues long: Acetyl-coenzyme A carboxylase carboxyl transferase subunit alpha (323 aa).

The CoA carboxyltransferase C-terminal domain occupies 39-293; sequence RLSKKSQQLT…RRALADSLRQ (255 aa).

The protein belongs to the AccA family. As to quaternary structure, acetyl-CoA carboxylase is a heterohexamer composed of biotin carboxyl carrier protein (AccB), biotin carboxylase (AccC) and two subunits each of ACCase subunit alpha (AccA) and ACCase subunit beta (AccD).

It is found in the cytoplasm. The enzyme catalyses N(6)-carboxybiotinyl-L-lysyl-[protein] + acetyl-CoA = N(6)-biotinyl-L-lysyl-[protein] + malonyl-CoA. The protein operates within lipid metabolism; malonyl-CoA biosynthesis; malonyl-CoA from acetyl-CoA: step 1/1. Component of the acetyl coenzyme A carboxylase (ACC) complex. First, biotin carboxylase catalyzes the carboxylation of biotin on its carrier protein (BCCP) and then the CO(2) group is transferred by the carboxyltransferase to acetyl-CoA to form malonyl-CoA. The sequence is that of Acetyl-coenzyme A carboxylase carboxyl transferase subunit alpha from Burkholderia orbicola (strain AU 1054).